Consider the following 134-residue polypeptide: D-ribose pyranase (134 aa).

The active-site Proton donor is histidine 20. Residues aspartate 28, histidine 101, and 123-125 (YCN) each bind substrate.

The protein belongs to the RbsD / FucU family. RbsD subfamily. In terms of assembly, homodecamer.

The protein localises to the cytoplasm. The enzyme catalyses beta-D-ribopyranose = beta-D-ribofuranose. It functions in the pathway carbohydrate metabolism; D-ribose degradation; D-ribose 5-phosphate from beta-D-ribopyranose: step 1/2. Its function is as follows. Catalyzes the interconversion of beta-pyran and beta-furan forms of D-ribose. The protein is D-ribose pyranase of Pseudomonas fluorescens (strain Pf0-1).